The sequence spans 122 residues: Large ribosomal subunit protein uL14 (122 aa).

The protein belongs to the universal ribosomal protein uL14 family. In terms of assembly, part of the 50S ribosomal subunit. Forms a cluster with proteins L3 and L19. In the 70S ribosome, L14 and L19 interact and together make contacts with the 16S rRNA in bridges B5 and B8.

Binds to 23S rRNA. Forms part of two intersubunit bridges in the 70S ribosome. This chain is Large ribosomal subunit protein uL14, found in Limosilactobacillus fermentum (strain NBRC 3956 / LMG 18251) (Lactobacillus fermentum).